A 645-amino-acid polypeptide reads, in one-letter code: 1,4-alpha-glucan branching enzyme GlgB (645 aa).

D309 serves as the catalytic Nucleophile. E352 acts as the Proton donor in catalysis. The tract at residues 619-645 is disordered; the sequence is VKTRKGSKKQDGSKTKVRSNVTSRGKR. Over residues 636 to 645 the composition is skewed to polar residues; the sequence is RSNVTSRGKR.

This sequence belongs to the glycosyl hydrolase 13 family. GlgB subfamily. Monomer.

It carries out the reaction Transfers a segment of a (1-&gt;4)-alpha-D-glucan chain to a primary hydroxy group in a similar glucan chain.. Its pathway is glycan biosynthesis; glycogen biosynthesis. Functionally, catalyzes the formation of the alpha-1,6-glucosidic linkages in glycogen by scission of a 1,4-alpha-linked oligosaccharide from growing alpha-1,4-glucan chains and the subsequent attachment of the oligosaccharide to the alpha-1,6 position. The sequence is that of 1,4-alpha-glucan branching enzyme GlgB from Bacillus cereus (strain 03BB102).